The chain runs to 87 residues: Homeotic protein ultrabithorax (87 aa).

Residues 22-27 (FYPWMA) carry the Antp-type hexapeptide motif.

It belongs to the Antp homeobox family. In terms of tissue distribution, in the embryo, expression is seen in the epidermis, somatic and visceral mesoderm, and the peripheral and central nervous system.

The protein resides in the nucleus. Sequence-specific transcription factor which is part of a developmental regulatory system that provides cells with specific positional identities on the anterior-posterior axis. Binds the consensus region 5'-TTAAT[GT][GA]-3'. This homeotic protein controls development of the cells in the posterior thoracic and first abdominal segments. It activates the synthesis of the decapentaplegic (DPP) growth factor. The chain is Homeotic protein ultrabithorax (Ubx) from Drosophila virilis (Fruit fly).